A 147-amino-acid chain; its full sequence is 3-dehydroquinate dehydratase (147 aa).

Y23 serves as the catalytic Proton acceptor. The substrate site is built by N74, H80, and D87. The Proton donor role is filled by H100. Substrate is bound by residues 101-102 (LS) and R111.

Belongs to the type-II 3-dehydroquinase family. Homododecamer.

It carries out the reaction 3-dehydroquinate = 3-dehydroshikimate + H2O. The protein operates within metabolic intermediate biosynthesis; chorismate biosynthesis; chorismate from D-erythrose 4-phosphate and phosphoenolpyruvate: step 3/7. Catalyzes a trans-dehydration via an enolate intermediate. The chain is 3-dehydroquinate dehydratase from Clostridium botulinum (strain ATCC 19397 / Type A).